A 567-amino-acid chain; its full sequence is Arginine--tRNA ligase (567 aa).

Residues 121-131 carry the 'HIGH' region motif; it reads ANPNGPLHVGH.

Belongs to the class-I aminoacyl-tRNA synthetase family.

The protein localises to the cytoplasm. It catalyses the reaction tRNA(Arg) + L-arginine + ATP = L-arginyl-tRNA(Arg) + AMP + diphosphate. The protein is Arginine--tRNA ligase of Methanococcoides burtonii (strain DSM 6242 / NBRC 107633 / OCM 468 / ACE-M).